The sequence spans 199 residues: Transgelin-3 (199 aa).

In terms of domain architecture, Calponin-homology (CH) spans 24 to 136 (ADLENKLVDW…RTLMALGSVA (113 aa)). A Phosphoserine modification is found at S163. The Calponin-like repeat unit spans residues 174–199 (IGLQMGSNKGASQAGMTGYGMPRQIM). Over residues 176–188 (LQMGSNKGASQAG) the composition is skewed to polar residues. Positions 176–199 (LQMGSNKGASQAGMTGYGMPRQIM) are disordered.

This sequence belongs to the calponin family.

The protein is Transgelin-3 (TAGLN3) of Pongo abelii (Sumatran orangutan).